The chain runs to 129 residues: UPF0325 protein Spro_3794 (129 aa).

The protein belongs to the UPF0325 family.

The protein is UPF0325 protein Spro_3794 of Serratia proteamaculans (strain 568).